Consider the following 516-residue polypeptide: Histone H4 transcription factor (516 aa).

3 consecutive C2H2-type zinc fingers follow at residues 15 to 39 (LQCE…VTQH), 127 to 151 (FLCL…VEAH), and 167 to 191 (VLCG…LRSH). The segment at 197-219 (VACPTCGGMFANNTKFLDHIRRQ) adopts a C2H2-type 4; degenerate zinc-finger fold. 5 consecutive C2H2-type zinc fingers follow at residues 227–249 (FQCS…MRNH), 253–276 (YKCP…RFRH), 282–304 (FKCD…LDTH), 310–335 (YSCD…RKVH), and 343–366 (YRCH…RKKH). Residues 371–516 (PSGHPRFRYK…AAEEPEVQMV (146 aa)) form an interaction with NPAT region. The tract at residues 372–405 (SGHPRFRYKEHEDGYMRLQLVRYESVELTQQLLR) is required for activation of histone H4 transcription and contributes to DNA-binding. Disordered stretches follow at residues 429–456 (TVPG…PASQ) and 486–516 (PGEP…VQMV). A compositionally biased stretch (acidic residues) spans 436 to 445 (PQEEAEEEGG).

Binds MBD2 and a histone deacetylase complex. Interacts with NPAT. Post-translationally, ubiquitinated. Ubiquitination may lead to proteasome-mediated degradation.

Its subcellular location is the nucleus. In terms of biological role, transcriptional repressor that binds to the consensus sequence 5'-CGGACGTT-3' and to the RB1 promoter. Transcriptional activator that promotes histone H4 gene transcription at the G1/S phase transition in conjunction with NPAT. Also activates transcription of the ATM and PRKDC genes. Autoregulates its expression by associating with its own promoter. This chain is Histone H4 transcription factor (HINFP), found in Bos taurus (Bovine).